We begin with the raw amino-acid sequence, 447 residues long: Cysteine--tRNA ligase (447 aa).

Zn(2+) is bound at residue Cys28. The 'HIGH' region motif lies at 30-40; the sequence is PTVYNYIHVGN. Residues Cys211, His236, and Glu240 each contribute to the Zn(2+) site. A 'KMSKS' region motif is present at residues 268–272; it reads KMSKS. Lys271 provides a ligand contact to ATP.

Belongs to the class-I aminoacyl-tRNA synthetase family. In terms of assembly, monomer. Zn(2+) is required as a cofactor.

The protein localises to the cytoplasm. The enzyme catalyses tRNA(Cys) + L-cysteine + ATP = L-cysteinyl-tRNA(Cys) + AMP + diphosphate. The protein is Cysteine--tRNA ligase of Streptococcus pneumoniae (strain ATCC BAA-255 / R6).